The primary structure comprises 425 residues: D-arabinitol transporter (425 aa).

Topologically, residues 1-7 (MSINNKQ) are cytoplasmic. Residues 8-28 (WLGLPLNLLWGYIAIAVFMTG) form a helical membrane-spanning segment. The Extracellular portion of the chain corresponds to 29–51 (DGFELAFLSHYIKALGFSPAEAS). The helical transmembrane segment at 52-72 (FAFTLYGLAAALSAWISGVVA) threads the bilayer. The Cytoplasmic portion of the chain corresponds to 73–80 (EIITPLKT). Residues 81 to 101 (MMIGFVLWCVFHVLFLVFGLG) form a helical membrane-spanning segment. Topologically, residues 102-107 (HANYAL) are extracellular. A helical membrane pass occupies residues 108–128 (ILLFYGIRGFAYPLFLYSFIV). Topologically, residues 129–141 (AIVHNVKSDNASS) are cytoplasmic. The helical transmembrane segment at 142-162 (AIGWFWAVYSIGIGVFGSYIP) threads the bilayer. At 163-172 (SFTIPHIGEM) the chain is on the extracellular side. The chain crosses the membrane as a helical span at residues 173 to 193 (GTLWLALAFCLTGGVIALVSL). Topologically, residues 194–237 (RHIQTPQHMQNLTTREKFSELGRAATLLYTNRNILLSSMVRIIN) are cytoplasmic. Residues 238–258 (TLSLFGFAVIMPMMFVDELGF) traverse the membrane as a helical segment. The Extracellular portion of the chain corresponds to 259–263 (STSEW). A helical membrane pass occupies residues 264-284 (LQVWAVFFFTTIFSNVLWGIL). Over 285 to 295 (GEKLGWMKVVR) the chain is Cytoplasmic. A helical membrane pass occupies residues 296–316 (WFGCIGMALSSLAFYYIPQHF). Over 317 to 323 (GHSFAMA) the chain is Extracellular. The chain crosses the membrane as a helical span at residues 324–344 (LIPAIALGIFVAAFVPLAAVF). At 345–360 (PALEPKHKGAAISVYN) the chain is on the cytoplasmic side. A helical membrane pass occupies residues 361 to 381 (LSAGMSNFLAPAIAVVLLPFF). The Extracellular portion of the chain corresponds to 382–383 (ST). Residues 384 to 404 (IGVVIAYTALYVVAFFLCAFI) traverse the membrane as a helical segment. The Cytoplasmic segment spans residues 405 to 425 (RVEQPGFSHKEATAREQVEFS).

Belongs to the major facilitator superfamily. Sugar transporter (TC 2.A.1.1) family. CsbX subfamily.

Its subcellular location is the cell membrane. In Klebsiella pneumoniae, this protein is D-arabinitol transporter (dalT).